We begin with the raw amino-acid sequence, 382 residues long: Alkanesulfonate monooxygenase (382 aa).

It belongs to the SsuD family. Homotetramer.

It carries out the reaction an alkanesulfonate + FMNH2 + O2 = an aldehyde + FMN + sulfite + H2O + 2 H(+). Catalyzes the desulfonation of aliphatic sulfonates. The polypeptide is Alkanesulfonate monooxygenase (Serratia proteamaculans (strain 568)).